Consider the following 192-residue polypeptide: Recombination protein RecR (192 aa).

Residues 51 to 66 form a C4-type zinc finger; the sequence is CQTCFHLSADPECEIC. Positions 74-168 constitute a Toprim domain; the sequence is GLICVVADSR…PVSRIAYGLP (95 aa).

The protein belongs to the RecR family.

Functionally, may play a role in DNA repair. It seems to be involved in an RecBC-independent recombinational process of DNA repair. It may act with RecF and RecO. This is Recombination protein RecR from Parasynechococcus marenigrum (strain WH8102).